The primary structure comprises 589 residues: Kelch-like protein 25 (589 aa).

Residues 46-114 enclose the BTB domain; the sequence is TDMTLWAGNR…AYSSKIIINE (69 aa). One can recognise a BACK domain in the interval 149 to 250; that stretch reads CLGMMILSDA…LPSELLKEAV (102 aa). Kelch repeat units lie at residues 296-340, 341-388, 389-444, 446-492, 494-538, and 539-585; these read TLLI…AIGC, KVYI…ELDN, CLYV…SAKL, LFVF…VLGS, IFIM…ASGN, and KVYV…STWK.

In terms of assembly, component of the BCR(KLHL25) E3 ubiquitin ligase complex, at least composed of cul3, klhl25 and rbx1.

The protein operates within protein modification; protein ubiquitination. Functionally, substrate-specific adapter of a BCR (BTB-CUL3-RBX1) E3 ubiquitin ligase complex involved in various processes, such as translation homeostasis and lipid synthesis. The BCR(KLHL25) ubiquitin ligase complex acts by mediating ubiquitination of hypophosphorylated eif4ebp1 (4E-BP1): ubiquitination and subsequent degradation of hypophosphorylated EIF4EBP1 (4E-BP1) probably serves as a homeostatic mechanism to maintain translation and prevent eIF4E inhibition when eIF4E levels are low. The BCR(KLHL25) complex also acts as a regulator of lipid synthesis by mediating ubiquitination and degradation of ACLY, thereby inhibiting lipid synthesis. The chain is Kelch-like protein 25 from Xenopus laevis (African clawed frog).